We begin with the raw amino-acid sequence, 382 residues long: 4-hydroxy-3-methylbut-2-en-1-yl diphosphate synthase (flavodoxin) (382 aa).

4 residues coordinate [4Fe-4S] cluster: cysteine 290, cysteine 293, cysteine 327, and glutamate 334.

The protein belongs to the IspG family. Requires [4Fe-4S] cluster as cofactor.

The enzyme catalyses (2E)-4-hydroxy-3-methylbut-2-enyl diphosphate + oxidized [flavodoxin] + H2O + 2 H(+) = 2-C-methyl-D-erythritol 2,4-cyclic diphosphate + reduced [flavodoxin]. The protein operates within isoprenoid biosynthesis; isopentenyl diphosphate biosynthesis via DXP pathway; isopentenyl diphosphate from 1-deoxy-D-xylulose 5-phosphate: step 5/6. In terms of biological role, converts 2C-methyl-D-erythritol 2,4-cyclodiphosphate (ME-2,4cPP) into 1-hydroxy-2-methyl-2-(E)-butenyl 4-diphosphate. The protein is 4-hydroxy-3-methylbut-2-en-1-yl diphosphate synthase (flavodoxin) of Rhodopirellula baltica (strain DSM 10527 / NCIMB 13988 / SH1).